A 229-amino-acid chain; its full sequence is Clathrin light chain B (229 aa).

2 stretches are compositionally biased toward low complexity: residues Met1–Glu17 and Gly45–Gly58. The tract at residues Met1 to Ala80 is disordered. Phosphoserine occurs at positions 11 and 13. Residues Ala93 to Arg155 are involved in binding clathrin heavy chain. Position 187 is a phosphothreonine (Thr187). A disulfide bridge connects residues Cys199 and Cys209. The residue at position 204 (Lys204) is an N6-acetyllysine. A Phosphoserine modification is found at Ser217.

This sequence belongs to the clathrin light chain family. Clathrin coats are formed from molecules containing 3 heavy chains and 3 light chains. Interacts (via N-terminus) with HIP1. Interacts with HIP1R.

Its subcellular location is the cytoplasmic vesicle membrane. The protein resides in the membrane. The protein localises to the coated pit. Functionally, clathrin is the major protein of the polyhedral coat of coated pits and vesicles. This chain is Clathrin light chain B (Cltb), found in Rattus norvegicus (Rat).